We begin with the raw amino-acid sequence, 484 residues long: Ribosome biogenesis protein NOP53 (484 aa).

Disordered regions lie at residues 1 to 51 and 304 to 356; these read MAAG…WRRL and ESDG…AARK. Position 2 is an N-acetylalanine (A2). S29 carries the phosphoserine modification. Positions 35–49 are enriched in basic residues; sequence RRRRRGPRNKKRGWR. The segment at 148 to 437 is mediates interaction with CDKN2A/isoform tumor suppressor ARF; sequence KEELWEKLAK…SELSGSLRTL (290 aa). A Phosphoserine modification is found at S305. The span at 336 to 348 shows a compositional bias: basic and acidic residues; the sequence is PEKRMEKKTEQQR. A mediates interaction with human herpesvirus 8 protein ORF16 region spans residues 348–392; it reads RRREKAARKLRVQQAALRAARLQHQELFRLRGIKAQVARRLAELA. Nucleolar localization signal stretches follow at residues 353 to 401 and 402 to 484; these read AARK…RRIR and RLAE…EIQL.

It belongs to the NOP53 family. Homooligomer. Interacts with PTEN; regulates PTEN phosphorylation and increases its stability. Interacts with RPL11; retains RPL11 into the nucleolus. Interacts with CDKN2A/isoform tumor suppressor ARF; the interaction is direct and promotes ARF nucleoplasmic relocalization and ubiquitin-mediated proteasomal degradation. Interacts with NPM1; the interaction is direct and competitive with MYC. Interacts with NF2 (via FERM domain); the interaction is direct. Interacts with p53/TP53 (via the oligomerization region); the interaction is direct and may prevent the MDM2-mediated proteasomal degradation of p53/TP53. Interacts with RIGI; may regulate RIGI through USP15-mediated 'Lys-63'-linked deubiquitination. Interacts with UBTF. In terms of processing, ubiquitin-mediated proteasomal degradation is regulated by c-JUN. It is associated with relocalization to the nucleoplasm and decreased homooligomerization. Phosphorylated upon DNA damage probably by ATM and DNA-PK; may regulate NOP53 degradation.

It is found in the nucleus. It localises to the nucleolus. The protein resides in the nucleoplasm. Functionally, nucleolar protein which is involved in the integration of the 5S RNP into the ribosomal large subunit during ribosome biogenesis. In ribosome biogenesis, may also play a role in rRNA transcription. Also functions as a nucleolar sensor that regulates the activation of p53/TP53 in response to ribosome biogenesis perturbation, DNA damage and other stress conditions. DNA damage or perturbation of ribosome biogenesis disrupt the interaction between NOP53 and RPL11 allowing RPL11 transport to the nucleoplasm where it can inhibit MDM2 and allow p53/TP53 activation. It may also positively regulate the function of p53/TP53 in cell cycle arrest and apoptosis through direct interaction, preventing its MDM2-dependent ubiquitin-mediated proteasomal degradation. Originally identified as a tumor suppressor, it may also play a role in cell proliferation and apoptosis by positively regulating the stability of PTEN, thereby antagonizing the PI3K-AKT/PKB signaling pathway. May also inhibit cell proliferation and increase apoptosis through its interaction with NF2. May negatively regulate NPM1 by regulating its nucleoplasmic localization, oligomerization and ubiquitin-mediated proteasomal degradation. Thereby, may prevent NPM1 interaction with MYC and negatively regulate transcription mediated by the MYC-NPM1 complex. May also regulate cellular aerobic respiration. In the cellular response to viral infection, may play a role in the attenuation of interferon-beta through the inhibition of RIGI. This chain is Ribosome biogenesis protein NOP53, found in Mus musculus (Mouse).